A 271-amino-acid chain; its full sequence is Putative phosphoenolpyruvate synthase regulatory protein (271 aa).

Position 152-159 (152-159 (GVSRCGKT)) interacts with ADP.

Belongs to the pyruvate, phosphate/water dikinase regulatory protein family. PSRP subfamily.

The enzyme catalyses [pyruvate, water dikinase] + ADP = [pyruvate, water dikinase]-phosphate + AMP + H(+). The catalysed reaction is [pyruvate, water dikinase]-phosphate + phosphate + H(+) = [pyruvate, water dikinase] + diphosphate. In terms of biological role, bifunctional serine/threonine kinase and phosphorylase involved in the regulation of the phosphoenolpyruvate synthase (PEPS) by catalyzing its phosphorylation/dephosphorylation. This is Putative phosphoenolpyruvate synthase regulatory protein from Legionella pneumophila (strain Corby).